The following is a 777-amino-acid chain: Lon protease (777 aa).

The region spanning 11 to 204 (IPVLPLRDVV…FLMAIMETEI (194 aa)) is the Lon N-terminal domain. ATP is bound at residue 356–363 (GPPGVGKT). The Lon proteolytic domain maps to 592-773 (LNQIGQVVGL…EEVLKIALEN (182 aa)). Active-site residues include S679 and K722.

It belongs to the peptidase S16 family. As to quaternary structure, homohexamer. Organized in a ring with a central cavity.

Its subcellular location is the cytoplasm. It catalyses the reaction Hydrolysis of proteins in presence of ATP.. Its function is as follows. ATP-dependent serine protease that mediates the selective degradation of mutant and abnormal proteins as well as certain short-lived regulatory proteins. Required for cellular homeostasis and for survival from DNA damage and developmental changes induced by stress. Degrades polypeptides processively to yield small peptide fragments that are 5 to 10 amino acids long. Binds to DNA in a double-stranded, site-specific manner. The chain is Lon protease from Buchnera aphidicola subsp. Schizaphis graminum (strain Sg).